The primary structure comprises 231 residues: Large ribosomal subunit protein uL1 (231 aa).

This sequence belongs to the universal ribosomal protein uL1 family. Part of the 50S ribosomal subunit.

Its function is as follows. Binds directly to 23S rRNA. The L1 stalk is quite mobile in the ribosome, and is involved in E site tRNA release. Functionally, protein L1 is also a translational repressor protein, it controls the translation of the L11 operon by binding to its mRNA. The sequence is that of Large ribosomal subunit protein uL1 from Nitrosococcus oceani (strain ATCC 19707 / BCRC 17464 / JCM 30415 / NCIMB 11848 / C-107).